Reading from the N-terminus, the 194-residue chain is Imidazoleglycerol-phosphate dehydratase (194 aa).

It belongs to the imidazoleglycerol-phosphate dehydratase family.

It localises to the cytoplasm. The catalysed reaction is D-erythro-1-(imidazol-4-yl)glycerol 3-phosphate = 3-(imidazol-4-yl)-2-oxopropyl phosphate + H2O. The protein operates within amino-acid biosynthesis; L-histidine biosynthesis; L-histidine from 5-phospho-alpha-D-ribose 1-diphosphate: step 6/9. This chain is Imidazoleglycerol-phosphate dehydratase, found in Bacillus cereus (strain B4264).